The sequence spans 603 residues: Mitochondrial distribution and morphology protein 34 (603 aa).

The 205-residue stretch at 1 to 205 (MAFNFNWSPL…SPEYQEIETE (205 aa)) folds into the SMP-LTD domain. The span at 320–332 (KSGASSVASGSTG) shows a compositional bias: low complexity. Disordered stretches follow at residues 320–511 (KSGA…PLLR) and 558–603 (IARK…AYVA). A compositionally biased stretch (polar residues) spans 333–351 (NETLSSRPTLASSYSTSAG). Residues 371 to 380 (VVDLRRKDGA) are compositionally biased toward basic and acidic residues. Over residues 383–403 (GVSTEANTPLPSTQVSDTSSV) the composition is skewed to polar residues. Over residues 452-463 (PLLAPAPLIPNA) the composition is skewed to low complexity. The span at 500-509 (RQAQQSTSPL) shows a compositional bias: polar residues. Basic and acidic residues predominate over residues 558-570 (IARKVQEEKDKSS).

This sequence belongs to the MDM34 family. As to quaternary structure, component of the ER-mitochondria encounter structure (ERMES) or MDM complex, composed of mmm1, mdm10, mdm12 and mdm34.

The protein resides in the mitochondrion outer membrane. Component of the ERMES/MDM complex, which serves as a molecular tether to connect the endoplasmic reticulum (ER) and mitochondria. Components of this complex are involved in the control of mitochondrial shape and protein biogenesis, and function in nonvesicular lipid trafficking between the ER and mitochondria. Mdm34 is required for the interaction of the ER-resident membrane protein mmm1 and the outer mitochondrial membrane-resident beta-barrel protein mdm10. This Pyrenophora tritici-repentis (strain Pt-1C-BFP) (Wheat tan spot fungus) protein is Mitochondrial distribution and morphology protein 34.